A 248-amino-acid polypeptide reads, in one-letter code: 3-deoxy-manno-octulosonate cytidylyltransferase (248 aa).

This sequence belongs to the KdsB family. Mg(2+) serves as cofactor.

Its subcellular location is the cytoplasm. The enzyme catalyses 3-deoxy-alpha-D-manno-oct-2-ulosonate + CTP = CMP-3-deoxy-beta-D-manno-octulosonate + diphosphate. The protein operates within nucleotide-sugar biosynthesis; CMP-3-deoxy-D-manno-octulosonate biosynthesis; CMP-3-deoxy-D-manno-octulosonate from 3-deoxy-D-manno-octulosonate and CTP: step 1/1. It participates in bacterial outer membrane biogenesis; lipopolysaccharide biosynthesis. Functionally, activates KDO (a required 8-carbon sugar) for incorporation into bacterial lipopolysaccharide in Gram-negative bacteria. The chain is 3-deoxy-manno-octulosonate cytidylyltransferase from Escherichia coli O157:H7.